A 502-amino-acid polypeptide reads, in one-letter code: ATP synthase subunit alpha (502 aa).

Residues 115–138 (VDGLGPIETTETRPIESPAPGVMD) are disordered. 169–176 (GDRQTGKT) contacts ATP.

The protein belongs to the ATPase alpha/beta chains family. In terms of assembly, F-type ATPases have 2 components, CF(1) - the catalytic core - and CF(0) - the membrane proton channel. CF(1) has five subunits: alpha(3), beta(3), gamma(1), delta(1), epsilon(1). CF(0) has three main subunits: a(1), b(2) and c(9-12). The alpha and beta chains form an alternating ring which encloses part of the gamma chain. CF(1) is attached to CF(0) by a central stalk formed by the gamma and epsilon chains, while a peripheral stalk is formed by the delta and b chains.

It is found in the cell membrane. It catalyses the reaction ATP + H2O + 4 H(+)(in) = ADP + phosphate + 5 H(+)(out). Its function is as follows. Produces ATP from ADP in the presence of a proton gradient across the membrane. The alpha chain is a regulatory subunit. This chain is ATP synthase subunit alpha, found in Geobacillus sp. (strain WCH70).